Reading from the N-terminus, the 916-residue chain is Isoleucine--tRNA ligase (916 aa).

Positions 58 to 68 (PYANGHLHIGH) match the 'HIGH' region motif. E568 contributes to the L-isoleucyl-5'-AMP binding site. The short motif at 609–613 (KMSKS) is the 'KMSKS' region element. K612 lines the ATP pocket. Residues C891, C894, C906, and C909 each coordinate Zn(2+).

It belongs to the class-I aminoacyl-tRNA synthetase family. IleS type 1 subfamily. Monomer. Zn(2+) serves as cofactor.

It localises to the cytoplasm. It carries out the reaction tRNA(Ile) + L-isoleucine + ATP = L-isoleucyl-tRNA(Ile) + AMP + diphosphate. In terms of biological role, catalyzes the attachment of isoleucine to tRNA(Ile). As IleRS can inadvertently accommodate and process structurally similar amino acids such as valine, to avoid such errors it has two additional distinct tRNA(Ile)-dependent editing activities. One activity is designated as 'pretransfer' editing and involves the hydrolysis of activated Val-AMP. The other activity is designated 'posttransfer' editing and involves deacylation of mischarged Val-tRNA(Ile). The polypeptide is Isoleucine--tRNA ligase (Campylobacter fetus subsp. fetus (strain 82-40)).